We begin with the raw amino-acid sequence, 105 residues long: Iron-sulfur cluster assembly protein CyaY (105 aa).

The protein belongs to the frataxin family.

Functionally, involved in iron-sulfur (Fe-S) cluster assembly. May act as a regulator of Fe-S biogenesis. The protein is Iron-sulfur cluster assembly protein CyaY of Paraburkholderia phymatum (strain DSM 17167 / CIP 108236 / LMG 21445 / STM815) (Burkholderia phymatum).